A 1190-amino-acid polypeptide reads, in one-letter code: ATPase histone chaperone abo1 (1190 aa).

Positions 1 to 11 (MKEEASEHGGS) are enriched in basic and acidic residues. Disordered stretches follow at residues 1 to 185 (MKEE…RKTH) and 204 to 253 (YIDS…DLAD). Acidic residues-rich tracts occupy residues 52–62 (QEDEGDEDWEE) and 82–106 (SEGDDEPFEVSESSALEDELSDSED). The segment covering 112 to 131 (VRSKPKYKPGTRRSTRLRNR) has biased composition (basic residues). Basic and acidic residues predominate over residues 141 to 152 (EEHRPILRERTS). 309–314 (PGTGKT) serves as a coordination point for ATP. The region spanning 794–922 (RLLNKLKIKL…ANVLLGVEDM (129 aa)) is the Bromo domain.

This sequence belongs to the AAA ATPase family. Homohexamer. Interacts with the FACT complex subunits spt16 and pob3. Interacts with histone H3-H4 (via N-terminus).

Its subcellular location is the nucleus. It localises to the chromosome. It carries out the reaction ATP + H2O = ADP + phosphate + H(+). In terms of biological role, ATPase histone chaperone which facilitates loading of histone H3-H4 onto DNA in an ATP-dependent manner. Plays a genome-wide role in nucleosome organization and establishment of chromatin. Also plays a role in heterochromatin assembly by stabilizing recruitment of the histone methyltransferase clr4 to methylated histone H3, to promote the transition from H3K9me2 to H3K9me3. This Schizosaccharomyces pombe (strain 972 / ATCC 24843) (Fission yeast) protein is ATPase histone chaperone abo1.